Reading from the N-terminus, the 94-residue chain is FXYD domain-containing ion transport regulator 6 (94 aa).

The first 17 residues, 1 to 17 (METVLILCSLLAPVVLA), serve as a signal peptide directing secretion. The Extracellular segment spans residues 18-34 (SAAEKEKEKDPFYYDYQ). A helical membrane pass occupies residues 35 to 57 (TLRIGGLVFAVVLFSVGILLILS). Over 58 to 94 (RRCKCSFNQKPRAPGDEEAQVENLITTNAAEPQKAEN) the chain is Cytoplasmic.

This sequence belongs to the FXYD family. In terms of assembly, regulatory subunit of the sodium/potassium-transporting ATPase which is composed of a catalytic alpha subunit, a non-catalytic beta subunit and an additional regulatory subunit. The regulatory subunit, a member of the FXYD protein family, modulates the enzymatic activity in a tissue- and isoform-specific way by changing affinities of the Na+/K+-ATPase toward Na(+), K(+) or ATP. As to expression, expressed in the neuronal fibers of the medial part of lateral habenula nucleus, thalamus, hypothalamus, stria terminalis, zona incerta, amygdaloid body and cingulum, olfactory bulb, hippocampus, cerebral cortex and cerebellum. In the cerebellum there is a predominant expression pattern in the granule layer of lobules VI-IX of the posterior lobe. Detected in inner ear.

It is found in the cell membrane. In terms of biological role, associates with and regulates the activity of the sodium/potassium-transporting ATPase (NKA) which catalyzes the hydrolysis of ATP coupled with the exchange of Na(+) and K(+) ions across the plasma membrane. Decreases the apparent affinity of the transporter for Na(+). In addition to modulating NKA kinetics, may also function as a regulator of NKA localization to the plasma membrane. This chain is FXYD domain-containing ion transport regulator 6 (Fxyd6), found in Rattus norvegicus (Rat).